The chain runs to 242 residues: Probable inactive serine protease 58 (242 aa).

Residues 1 to 17 form the signal peptide; the sequence is MNLILLWALLNLPVALT. In terms of domain architecture, Peptidase S1 spans 18–240; it reads FDPNYKDDIT…YIPWIENTIQ (223 aa). 4 cysteine pairs are disulfide-bonded: Cys41-Cys57, Cys134-Cys202, Cys166-Cys181, and Cys192-Cys216. N-linked (GlcNAc...) asparagine glycosylation is present at Asn157.

This sequence belongs to the peptidase S1 family.

It localises to the secreted. In Bos taurus (Bovine), this protein is Probable inactive serine protease 58 (PRSS58).